The sequence spans 165 residues: Phosphopantetheine adenylyltransferase (165 aa).

S10 is a binding site for substrate. Residues 10–11 (SF) and H18 each bind ATP. Substrate contacts are provided by K42, T79, and R93. Residues 94–96 (GLR), E104, and 129–135 (VRPITAT) contribute to the ATP site.

Belongs to the bacterial CoaD family. In terms of assembly, homohexamer. It depends on Mg(2+) as a cofactor.

It is found in the cytoplasm. The enzyme catalyses (R)-4'-phosphopantetheine + ATP + H(+) = 3'-dephospho-CoA + diphosphate. It participates in cofactor biosynthesis; coenzyme A biosynthesis; CoA from (R)-pantothenate: step 4/5. In terms of biological role, reversibly transfers an adenylyl group from ATP to 4'-phosphopantetheine, yielding dephospho-CoA (dPCoA) and pyrophosphate. This Afipia carboxidovorans (strain ATCC 49405 / DSM 1227 / KCTC 32145 / OM5) (Oligotropha carboxidovorans) protein is Phosphopantetheine adenylyltransferase.